Consider the following 313-residue polypeptide: Solute carrier family 25 member 36 (313 aa).

Solcar repeat units follow at residues 4 to 110 (RDTL…CKEK), 118 to 205 (DSTQ…IKRK), and 226 to 310 (SDFV…VVYL). 6 consecutive transmembrane segments (helical) span residues 7 to 27 (LVHL…TCPL), 41 to 57 (LYIS…ASVN), 113 to 133 (NIFN…AGFT), 182 to 202 (MSAS…YESI), 228 to 248 (FVGM…IAYP), and 293 to 313 (QIPN…LLDG).

It belongs to the mitochondrial carrier (TC 2.A.29) family.

The protein localises to the mitochondrion inner membrane. In terms of biological role, mitochondrial transporter that imports/exports pyrimidine nucleotides into and from mitochondria. Transports preferentially cytosine and uracil (deoxy)nucleoside mono-, di-, and triphosphates by uniport and antiport mechanism. The sequence is that of Solute carrier family 25 member 36 (SLC25A36) from Gallus gallus (Chicken).